The sequence spans 521 residues: Histidine--tRNA ligase (521 aa).

Residues 137–139 (DLT), arginine 164, glutamine 180, aspartate 184, arginine 338, and 342–343 (YY) contribute to the L-histidine site.

This sequence belongs to the class-II aminoacyl-tRNA synthetase family.

The catalysed reaction is tRNA(His) + L-histidine + ATP = L-histidyl-tRNA(His) + AMP + diphosphate + H(+). Involved in protein synthesis. Catalyzes the specific attachment of an amino acid to its cognate tRNA in a 2 step reaction: the amino acid (AA) is first activated by ATP to form AA-AMP and then transferred to the acceptor end of the tRNA. Required for germ cell development. This Caenorhabditis elegans protein is Histidine--tRNA ligase.